The chain runs to 53 residues: UPF0181 protein VC_A0569 (53 aa).

The protein belongs to the UPF0181 family.

The chain is UPF0181 protein VC_A0569 from Vibrio cholerae serotype O1 (strain ATCC 39315 / El Tor Inaba N16961).